We begin with the raw amino-acid sequence, 378 residues long: MDAAHWHQGLGLVKPMEEMLMAANAAAGANPNPAATAPSSVTGGALRGGGGGGAPPVAGGAGAGSTERRARPQKEKALNCPRCNSTNTKFCYYNNYSLQQPRYFCKTCRRYWTEGGSLRNVPVGGGSRKNKRSSSSAASASPASASTANSVVTSASMSMSMASTGGGASKNPKLVHEGAQDLNLAFPHHGGLQAPGEFPAFPSLESSSVCNPGGPMGTNGRGGGALSAMELLRSTGCYMPLQVPMQMPAEYATPGFALGEFRAPPPPPQSSQSLLGFSLDAHGSVGGPSAAGFGSSAGLQGVPESTGRLLFPFEDLKPTVSSGTGGGGASGGGAGVDGGHQFDHGKEQQAGGGGGGPGGHDTPGFWNGMIGGGSGTSW.

Low complexity predominate over residues 28 to 38 (GANPNPAATAP). Positions 28–79 (GANPNPAATAPSSVTGGALRGGGGGGAPPVAGGAGAGSTERRARPQKEKALN) are disordered. Residues 45–63 (ALRGGGGGGAPPVAGGAGA) are compositionally biased toward gly residues. Residues 66 to 77 (TERRARPQKEKA) are compositionally biased toward basic and acidic residues. The Dof-type zinc finger occupies 78–132 (LNCPRCNSTNTKFCYYNNYSLQQPRYFCKTCRRYWTEGGSLRNVPVGGGSRKNKR). C80, C83, C105, and C108 together coordinate Zn(2+). Disordered stretches follow at residues 116-148 (GSLR…ASTA), 203-222 (SLES…NGRG), and 316-378 (LKPT…GTSW). Positions 133 to 148 (SSSSAASASPASASTA) are enriched in low complexity. 3 stretches are compositionally biased toward gly residues: residues 323 to 338 (GTGG…GVDG), 350 to 361 (AGGGGGGPGGHD), and 369 to 378 (MIGGGSGTSW).

The protein localises to the nucleus. Its function is as follows. Transcription factor that may transactivate seed storage protein genes in developing seeds. The polypeptide is Dof zinc finger protein 1 (Oryza sativa subsp. japonica (Rice)).